Here is a 206-residue protein sequence, read N- to C-terminus: Cytochrome b6-f complex iron-sulfur subunit, chloroplastic (206 aa).

The N-terminal 29 residues, 1-29 (MAMITSRRAAAPCKAQATRRSRVMSVVRA), are a transit peptide targeting the chloroplast. A helical transmembrane segment spans residues 48 to 68 (ILLGGASLPVGSLALGYGAFF). The region spanning 92–188 (ANAWLATHQK…CDVQEDGLVT (97 aa)) is the Rieske domain. Positions 134, 136, 152, and 155 each coordinate [2Fe-2S] cluster. A disulfide bridge links Cys-139 with Cys-154.

Belongs to the Rieske iron-sulfur protein family. The 4 large subunits of the cytochrome b6-f complex are cytochrome b6, subunit IV (17 kDa polypeptide, petD), cytochrome f and the Rieske protein, while the 4 small subunits are petG, petL, petM and petN. The complex functions as a dimer. Requires [2Fe-2S] cluster as cofactor.

It is found in the plastid. Its subcellular location is the chloroplast thylakoid membrane. The enzyme catalyses 2 oxidized [plastocyanin] + a plastoquinol + 2 H(+)(in) = 2 reduced [plastocyanin] + a plastoquinone + 4 H(+)(out). Its function is as follows. Component of the cytochrome b6-f complex, which mediates electron transfer between photosystem II (PSII) and photosystem I (PSI), cyclic electron flow around PSI, and state transitions. The polypeptide is Cytochrome b6-f complex iron-sulfur subunit, chloroplastic (petC) (Volvox carteri (Green alga)).